The chain runs to 253 residues: Tryptophan synthase alpha chain (253 aa).

Residues E47 and D58 each act as proton acceptor in the active site.

The protein belongs to the TrpA family. As to quaternary structure, tetramer of two alpha and two beta chains.

It carries out the reaction (1S,2R)-1-C-(indol-3-yl)glycerol 3-phosphate + L-serine = D-glyceraldehyde 3-phosphate + L-tryptophan + H2O. Its pathway is amino-acid biosynthesis; L-tryptophan biosynthesis; L-tryptophan from chorismate: step 5/5. Functionally, the alpha subunit is responsible for the aldol cleavage of indoleglycerol phosphate to indole and glyceraldehyde 3-phosphate. This chain is Tryptophan synthase alpha chain, found in Lactococcus lactis subsp. cremoris (strain SK11).